Reading from the N-terminus, the 155-residue chain is Zinc finger HIT domain-containing protein 3 (155 aa).

Residues Cys-11, Cys-14, Cys-22, Cys-25, Cys-30, Cys-34, His-38, and Cys-42 each contribute to the Zn(2+) site. An HIT-type zinc finger spans residues 11 to 42 (CVICLEKPKYRCPACRVPYCSVVCFRKHKEQC). Ser-80 carries the phosphoserine modification.

Thyroid receptor interacting proteins (TRIPs) specifically interact with the ligand binding domain of the thyroid receptor (TR). Requires the presence of thyroid hormone for its interaction. Interacts with NUFIP1. Interacts (via HIT-type zinc finger) with the RUVBL1/RUVBL2 complex in the presence of ADP.

It is found in the cytoplasm. It localises to the nucleus. In Homo sapiens (Human), this protein is Zinc finger HIT domain-containing protein 3 (ZNHIT3).